We begin with the raw amino-acid sequence, 1088 residues long: DNA damage-binding protein 1b (1088 aa).

It belongs to the DDB1 family. In terms of assembly, interacts with DDA1. Binds to KTN80.2/DWA3. Interacts with HTD1.

Its subcellular location is the nucleus. It functions in the pathway protein modification; protein ubiquitination. Component of light signal transduction machinery. Involved in repression of photomorphogenesis in darkness. Plays a role in DNA repair by forming with DDB2 the UV-damaged DNA-binding protein complex (UV-DDB). The protein is DNA damage-binding protein 1b of Arabidopsis thaliana (Mouse-ear cress).